A 667-amino-acid polypeptide reads, in one-letter code: Protein OS-9 (667 aa).

The signal sequence occupies residues 1-25; that stretch reads MAAETLLSSLLGLLLLGLLLPASLT. The region spanning 108–230 is the MRH domain; sequence APCLLKTKDW…TIRTPRLCPH (123 aa). Cys-110 and Cys-123 are joined by a disulfide. A mannooligosaccharide derivative contacts are provided by Trp-117, Trp-118, and Gln-130. Asn-177 carries an N-linked (GlcNAc...) asparagine glycan. Disulfide bonds link Cys-181-Cys-216 and Cys-196-Cys-228. A mannooligosaccharide derivative is bound by residues Asp-182, Arg-188, Glu-212, and Tyr-218. 5 disordered regions span residues 284–355, 372–452, 464–483, 504–540, and 633–667; these read WSET…NNVQ, LKGG…RDRL, LENI…LKKE, LEEK…PEHR, and AQKE…EFDF. Composition is skewed to basic and acidic residues over residues 302-311 and 396-412; these read TKDDSKDSDF and PQRE…RQRE. A compositionally biased stretch (acidic residues) spans 413-429; sequence MEEEEDEDEDEDEDEDE. The span at 430-452 shows a compositional bias: basic and acidic residues; the sequence is RQLLGEFEKELEGILLPSDRDRL. Residues 504 to 513 are compositionally biased toward basic and acidic residues; that stretch reads LEEKQSPELV. Residues 514–523 show a composition bias toward basic residues; that stretch reads KKHKKKRVVP. Over residues 633–647 the composition is skewed to basic and acidic residues; that stretch reads AQKERQRQKELESNY.

This sequence belongs to the OS-9 family. Component of the HRD1 complex, which comprises at least SYNV1/HRD1, DERL1/2, FAM8A1, HERPUD1/HERP, OS9, SEL1L and UBE2J1. FAM8A1 is stabilized by interaction with SYNV1, which prevents its proteasomal degradation. OS9 and UBE2J1 recruitment to the complex may be mediated by SEL1L. Through this complex, may interact with ERLEC1 and HSPA5. Interacts (via C-terminus) with CPNE6 (via second C2 domain); this interaction occurs in a calcium-dependent manner in vitro. Interacts with CREB3. Post-translationally, intramolecular disulfide bonds. Isoform 1 and isoform 2 are N-glycosylated. In terms of tissue distribution, ubiquitously expressed. Found as well in all tumor cell lines analyzed, amplified in sarcomas. Highly expressed in osteosarcoma SJSA-1 and rhabdomyosarcoma Rh30 cell lines. As to expression, isoform 2 is the major isoform detected in all cell types examined.

The protein resides in the endoplasmic reticulum lumen. Functionally, lectin component of the HRD1 complex, which functions in endoplasmic reticulum (ER) quality control and ER-associated degradation (ERAD). Specifically recognizes and binds improperly folded glycoproteins as well as hyperglycosylated proteins, retain them in the ER, and transfers them to the ubiquitination machinery and promote their degradation. Possible targets include TRPV4 as well as hyperglycosylated HSP90B1. This is Protein OS-9 (OS9) from Homo sapiens (Human).